Consider the following 264-residue polypeptide: Glutamate racemase (264 aa).

Substrate contacts are provided by residues 10 to 11 and 42 to 43; these read DS and YG. Residue cysteine 73 is the Proton donor/acceptor of the active site. 74–75 is a substrate binding site; that stretch reads NT. The Proton donor/acceptor role is filled by cysteine 183. Position 184 to 185 (184 to 185) interacts with substrate; it reads TH.

This sequence belongs to the aspartate/glutamate racemases family.

The enzyme catalyses L-glutamate = D-glutamate. It functions in the pathway cell wall biogenesis; peptidoglycan biosynthesis. Functionally, provides the (R)-glutamate required for cell wall biosynthesis. In Streptococcus agalactiae serotype III (strain NEM316), this protein is Glutamate racemase.